The following is a 933-amino-acid chain: Thyroid peroxidase (933 aa).

The N-terminal stretch at 1-18 (MRALAVLSVTLVMACTEA) is a signal peptide. Residues 19-846 (FFPFISRGKE…TCVDSGRLPR (828 aa)) are Extracellular-facing. N-linked (GlcNAc...) asparagine glycosylation occurs at asparagine 129. Cysteine 142 and cysteine 158 are oxidised to a cystine. Aspartate 238 serves as a coordination point for heme b. The active-site Proton acceptor is histidine 239. Aspartate 240 is a binding site for Ca(2+). Disulfide bonds link cysteine 259/cysteine 269 and cysteine 263/cysteine 286. Residue asparagine 307 is glycosylated (N-linked (GlcNAc...) asparagine). Ca(2+)-binding residues include threonine 321, phenylalanine 323, aspartate 325, and serine 327. Asparagine 342 carries an N-linked (GlcNAc...) asparagine glycan. Residues glutamate 399 and histidine 494 each coordinate heme b. Asparagine 569 carries N-linked (GlcNAc...) asparagine glycosylation. Disulfide bonds link cysteine 598-cysteine 655 and cysteine 696-cysteine 721. The 56-residue stretch at 740-795 (DKCGFPESVENGDFVHCEESGRRVLVYSCRHGYELQGREQLTCTQEGWDFQPPLCK) folds into the Sushi domain. An EGF-like; calcium-binding domain is found at 796–839 (DVNECADGAHPPCHASARCRNTKGGFQCLCADPYELGDDGRTCV). 3 disulfides stabilise this stretch: cysteine 800–cysteine 814, cysteine 808–cysteine 823, and cysteine 825–cysteine 838. Residues 847–871 (VTWISMSLAALLIGGFAGLTSTVIC) form a helical membrane-spanning segment. The Cytoplasmic portion of the chain corresponds to 872–933 (RWTRTGTKST…RDTHRLPRAL (62 aa)). The tract at residues 881 to 933 (TLPISETGGGTPELRCGKHQAVGTSPQRAAAQDSEQESAGMEGRDTHRLPRAL) is disordered. A compositionally biased stretch (basic and acidic residues) spans 922 to 933 (EGRDTHRLPRAL).

This sequence belongs to the peroxidase family. XPO subfamily. Interacts with DUOX1, DUOX2 and CYBA. Ca(2+) is required as a cofactor. Requires heme b as cofactor. Glycosylated. Post-translationally, heme is covalently bound through a H(2)O(2)-dependent autocatalytic process. Heme insertion is important for the delivery of protein at the cell surface. In terms of processing, cleaved in its N-terminal part.

Its subcellular location is the membrane. It is found in the cell surface. It catalyses the reaction 2 iodide + H2O2 + 2 H(+) = diiodine + 2 H2O. It carries out the reaction [thyroglobulin]-L-tyrosine + iodide + H2O2 + H(+) = [thyroglobulin]-3-iodo-L-tyrosine + 2 H2O. The catalysed reaction is [thyroglobulin]-3-iodo-L-tyrosine + iodide + H2O2 + H(+) = [thyroglobulin]-3,5-diiodo-L-tyrosine + 2 H2O. The enzyme catalyses 2 [thyroglobulin]-3,5-diiodo-L-tyrosine + H2O2 = [thyroglobulin]-L-thyroxine + [thyroglobulin]-dehydroalanine + 2 H2O. It catalyses the reaction [thyroglobulin]-3-iodo-L-tyrosine + [thyroglobulin]-3,5-diiodo-L-tyrosine + H2O2 = [thyroglobulin]-3,3',5-triiodo-L-thyronine + [thyroglobulin]-dehydroalanine + 2 H2O. It participates in hormone biosynthesis; thyroid hormone biosynthesis. Functionally, iodination and coupling of the hormonogenic tyrosines in thyroglobulin to yield the thyroid hormones T(3) and T(4). The protein is Thyroid peroxidase of Homo sapiens (Human).